We begin with the raw amino-acid sequence, 336 residues long: Phosphate acyltransferase (336 aa).

It belongs to the PlsX family. In terms of assembly, homodimer. Probably interacts with PlsY.

It localises to the cytoplasm. The enzyme catalyses a fatty acyl-[ACP] + phosphate = an acyl phosphate + holo-[ACP]. The protein operates within lipid metabolism; phospholipid metabolism. Its function is as follows. Catalyzes the reversible formation of acyl-phosphate (acyl-PO(4)) from acyl-[acyl-carrier-protein] (acyl-ACP). This enzyme utilizes acyl-ACP as fatty acyl donor, but not acyl-CoA. The polypeptide is Phosphate acyltransferase (Pseudomonas putida (strain ATCC 47054 / DSM 6125 / CFBP 8728 / NCIMB 11950 / KT2440)).